Reading from the N-terminus, the 704-residue chain is Elongation factor G (704 aa).

A tr-type G domain is found at 10–290 (NKVRNIGIMA…AVIDYLPSPL (281 aa)). GTP-binding positions include 19 to 26 (AHIDAGKT), 83 to 87 (DTPGH), and 137 to 140 (NKMD).

Belongs to the TRAFAC class translation factor GTPase superfamily. Classic translation factor GTPase family. EF-G/EF-2 subfamily.

The protein resides in the cytoplasm. In terms of biological role, catalyzes the GTP-dependent ribosomal translocation step during translation elongation. During this step, the ribosome changes from the pre-translocational (PRE) to the post-translocational (POST) state as the newly formed A-site-bound peptidyl-tRNA and P-site-bound deacylated tRNA move to the P and E sites, respectively. Catalyzes the coordinated movement of the two tRNA molecules, the mRNA and conformational changes in the ribosome. The chain is Elongation factor G from Clavibacter michiganensis subsp. michiganensis (strain NCPPB 382).